The following is a 762-amino-acid chain: Endonuclease MutS2 (762 aa).

Position 333–340 (333–340 (GVNAGGKT)) interacts with ATP. Residues 688–762 (LDLRGQRSEE…GGSGVKIVKL (75 aa)) enclose the Smr domain.

It belongs to the DNA mismatch repair MutS family. MutS2 subfamily. As to quaternary structure, homodimer. Binds to stalled ribosomes, contacting rRNA.

In terms of biological role, endonuclease that is involved in the suppression of homologous recombination and thus may have a key role in the control of bacterial genetic diversity. Acts as a ribosome collision sensor, splitting the ribosome into its 2 subunits. Detects stalled/collided 70S ribosomes which it binds and splits by an ATP-hydrolysis driven conformational change. Acts upstream of the ribosome quality control system (RQC), a ribosome-associated complex that mediates the extraction of incompletely synthesized nascent chains from stalled ribosomes and their subsequent degradation. Probably generates substrates for RQC. This Helicobacter pylori (strain J99 / ATCC 700824) (Campylobacter pylori J99) protein is Endonuclease MutS2.